Reading from the N-terminus, the 258-residue chain is Granzyme K (258 aa).

Positions 1–23 (MSFSSSALVFLVAGIYMSSESFH) are cleaved as a signal peptide. Residues 24–25 (TE) constitute a propeptide, activation peptide. The Peptidase S1 domain maps to 26–253 (IIGGREVQPH…YQTWIKSKLA (228 aa)). Cys51 and Cys67 form a disulfide bridge. Active-site charge relay system residues include His66 and Asp110. 3 disulfide bridges follow: Cys143-Cys214, Cys175-Cys193, and Cys204-Cys228. The active-site Charge relay system is the Ser208.

This sequence belongs to the peptidase S1 family. Granzyme subfamily. Speen, lungs and liver non-parenchymal cells.

Its subcellular location is the cytoplasmic granule. In Rattus norvegicus (Rat), this protein is Granzyme K (Gzmk).